A 424-amino-acid polypeptide reads, in one-letter code: Serine--tRNA ligase (424 aa).

Position 230-232 (230-232 (TAE)) interacts with L-serine. 261-263 (RSE) provides a ligand contact to ATP. Position 284 (E284) interacts with L-serine. 348 to 351 (EISS) provides a ligand contact to ATP. S384 lines the L-serine pocket.

This sequence belongs to the class-II aminoacyl-tRNA synthetase family. Type-1 seryl-tRNA synthetase subfamily. As to quaternary structure, homodimer. The tRNA molecule binds across the dimer.

The protein localises to the cytoplasm. It carries out the reaction tRNA(Ser) + L-serine + ATP = L-seryl-tRNA(Ser) + AMP + diphosphate + H(+). The catalysed reaction is tRNA(Sec) + L-serine + ATP = L-seryl-tRNA(Sec) + AMP + diphosphate + H(+). It functions in the pathway aminoacyl-tRNA biosynthesis; selenocysteinyl-tRNA(Sec) biosynthesis; L-seryl-tRNA(Sec) from L-serine and tRNA(Sec): step 1/1. Its function is as follows. Catalyzes the attachment of serine to tRNA(Ser). Is also able to aminoacylate tRNA(Sec) with serine, to form the misacylated tRNA L-seryl-tRNA(Sec), which will be further converted into selenocysteinyl-tRNA(Sec). The polypeptide is Serine--tRNA ligase (Streptococcus pneumoniae serotype 4 (strain ATCC BAA-334 / TIGR4)).